The sequence spans 130 residues: Small ribosomal subunit protein uS11 (130 aa).

It belongs to the universal ribosomal protein uS11 family. As to quaternary structure, part of the 30S ribosomal subunit. Interacts with proteins S7 and S18. Binds to IF-3.

In terms of biological role, located on the platform of the 30S subunit, it bridges several disparate RNA helices of the 16S rRNA. Forms part of the Shine-Dalgarno cleft in the 70S ribosome. The chain is Small ribosomal subunit protein uS11 from Microcystis aeruginosa (strain NIES-843 / IAM M-2473).